We begin with the raw amino-acid sequence, 115 residues long: MNPLIQSLTEGQLRTDIPSFRPGDTVRVHAKVVEGSRERIQIFEGVVISRKGQGISEMYTVRKISSGIGVERTFPIHTPRVEKIEVVRHGKVRRAKLYYLRALQGKAARIKEIRR.

It belongs to the bacterial ribosomal protein bL19 family.

In terms of biological role, this protein is located at the 30S-50S ribosomal subunit interface and may play a role in the structure and function of the aminoacyl-tRNA binding site. The chain is Large ribosomal subunit protein bL19 from Streptococcus equi subsp. zooepidemicus (strain H70).